A 424-amino-acid polypeptide reads, in one-letter code: T-DNA border endonuclease VirD2 (424 aa).

2 disordered regions span residues 206–269 (AQKI…GSSI) and 321–424 (RPVT…RGGT). Acidic residues predominate over residues 212 to 221 (EDTDFDETSP). The segment covering 243–261 (EPDRATRHDKQPLEQHARF) has biased composition (basic and acidic residues). Positions 330–339 (TVKRQQRSKR) are enriched in basic residues. Composition is skewed to basic and acidic residues over residues 394-408 (SPKRPRDRHDGELGG) and 415-424 (NRRDDGRGGT).

Functionally, tumor formation by A.tumefaciens involves the transfer and integration of a defined segment (T-DNA) of Ti plasmid DNA into the plant nuclear genome. The virD operon encodes a site-specific endonuclease that cleaves at a unique site within both 24 bp direct repeats flanking the T-DNA. The protein is T-DNA border endonuclease VirD2 (virD2) of Rhizobium radiobacter (Agrobacterium tumefaciens).